The primary structure comprises 648 residues: Macrolide export ATP-binding/permease protein MacB (648 aa).

The 239-residue stretch at L5–T243 folds into the ABC transporter domain. G41–S48 contributes to the ATP binding site. 4 consecutive transmembrane segments (helical) span residues L273–G293, L523–I543, A576–F596, and L600–C620.

Belongs to the ABC transporter superfamily. Macrolide exporter (TC 3.A.1.122) family. Homodimer. Part of the tripartite efflux system MacAB-TolC, which is composed of an inner membrane transporter, MacB, a periplasmic membrane fusion protein, MacA, and an outer membrane component, TolC. The complex forms a large protein conduit and can translocate molecules across both the inner and outer membranes. Interacts with MacA.

It localises to the cell inner membrane. Part of the tripartite efflux system MacAB-TolC. MacB is a non-canonical ABC transporter that contains transmembrane domains (TMD), which form a pore in the inner membrane, and an ATP-binding domain (NBD), which is responsible for energy generation. Confers resistance against macrolides. The sequence is that of Macrolide export ATP-binding/permease protein MacB from Shigella boydii serotype 4 (strain Sb227).